A 317-amino-acid polypeptide reads, in one-letter code: Beta-ketoacyl-[acyl-carrier-protein] synthase III (317 aa).

Active-site residues include Cys-112 and His-244. The interval Gln-245–Arg-249 is ACP-binding. Residue Asn-274 is part of the active site.

The protein belongs to the thiolase-like superfamily. FabH family. As to quaternary structure, homodimer.

It is found in the cytoplasm. The catalysed reaction is malonyl-[ACP] + acetyl-CoA + H(+) = 3-oxobutanoyl-[ACP] + CO2 + CoA. Its pathway is lipid metabolism; fatty acid biosynthesis. In terms of biological role, catalyzes the condensation reaction of fatty acid synthesis by the addition to an acyl acceptor of two carbons from malonyl-ACP. Catalyzes the first condensation reaction which initiates fatty acid synthesis and may therefore play a role in governing the total rate of fatty acid production. Possesses both acetoacetyl-ACP synthase and acetyl transacylase activities. Its substrate specificity determines the biosynthesis of branched-chain and/or straight-chain of fatty acids. This Rickettsia typhi (strain ATCC VR-144 / Wilmington) protein is Beta-ketoacyl-[acyl-carrier-protein] synthase III.